The chain runs to 494 residues: Cytochrome P450 2A8 (494 aa).

Cys-439 contributes to the heme binding site.

Belongs to the cytochrome P450 family. Heme serves as cofactor. As to expression, liver.

It localises to the endoplasmic reticulum membrane. The protein localises to the microsome membrane. The enzyme catalyses an organic molecule + reduced [NADPH--hemoprotein reductase] + O2 = an alcohol + oxidized [NADPH--hemoprotein reductase] + H2O + H(+). Its function is as follows. Highly active in 7-ethoxycoumarin O-deethylation, and benzphetamine N-demethylation; moderately active in testosterone 7-alpha-hydroxylation, ethylmorphine N-demethylation, p-nitroanisole O-demethylation; and only slightly active in benzopyrene 3-hydroxylation, 7-ethoxyresorufin O-deethylation, testosterone 2-alpha-hydroxylation and testosterone 17-oxidation. Competent in the metabolic activation of aflatoxin B1. This is Cytochrome P450 2A8 (CYP2A8) from Mesocricetus auratus (Golden hamster).